A 573-amino-acid chain; its full sequence is Dilute domain-containing protein SPAC25B8.08 (573 aa).

The Dilute domain occupies 180 to 464 (NAFLCEVNQV…LKKLDAFHEE (285 aa)).

The protein resides in the cytoplasm. Its subcellular location is the golgi apparatus. The polypeptide is Dilute domain-containing protein SPAC25B8.08 (Schizosaccharomyces pombe (strain 972 / ATCC 24843) (Fission yeast)).